Here is an 80-residue protein sequence, read N- to C-terminus: MATWLAIIFIVAALILGLIGGFLLARKYMMDYLKKNPPINEEMLRMMMMQMGQKPSQKKINQMMTMMNKNMDQNMKSAKK.

The chain crosses the membrane as a helical span at residues Trp4–Leu24.

Belongs to the UPF0154 family.

It localises to the cell membrane. This chain is UPF0154 protein SaurJH1_1431, found in Staphylococcus aureus (strain JH1).